Reading from the N-terminus, the 72-residue chain is High-potential iron-sulfur protein isozyme 1 (72 aa).

At Ala-1 the chain carries N-carbamoylalanine; partial. [4Fe-4S] cluster-binding residues include Cys-34, Cys-37, Cys-51, and Cys-65.

Belongs to the high-potential iron-sulfur protein (HiPIP) family. Homodimer.

Its function is as follows. Specific class of high-redox-potential 4Fe-4S ferredoxins. Functions in anaerobic electron transport in most purple and in some other photosynthetic bacteria and in at least one genus (Paracoccus) of halophilic, denitrifying bacteria. The polypeptide is High-potential iron-sulfur protein isozyme 1 (Ectothiorhodospira mobilis).